The sequence spans 948 residues: Protocadherin alpha-10 (948 aa).

A signal peptide spans Met1–Gly28. 6 Cadherin domains span residues Gln29 to Phe132, Ser133 to Phe241, Asp242 to Val349, Ile350 to Phe454, Ala455 to Leu564, and Gly587 to Val689. Residues Gln29–Asn695 are Extracellular-facing. 2 N-linked (GlcNAc...) asparagine glycosylation sites follow: Asn256 and Asn264. Asn547 is a glycosylation site (N-linked (GlcNAc...) asparagine). Residues Val696–Tyr716 form a helical membrane-spanning segment. At Thr717–Gln948 the chain is on the cytoplasmic side. 6 PXXP repeats span residues Pro732 to Pro735, Pro772 to Pro775, Pro797 to Pro800, Pro830 to Pro833, Pro871 to Pro874, and Pro889 to Pro892. A 6 X 4 AA repeats of P-X-X-P region spans residues Pro732–Pro892. Disordered stretches follow at residues Asp783 to Trp804 and Arg827 to Gln948. The span at Asp907–Lys921 shows a compositional bias: basic and acidic residues.

It is found in the cell membrane. Its function is as follows. Potential calcium-dependent cell-adhesion protein. May be involved in the establishment and maintenance of specific neuronal connections in the brain. The chain is Protocadherin alpha-10 (PCDHA10) from Pan troglodytes (Chimpanzee).